We begin with the raw amino-acid sequence, 441 residues long: uncharacterized protein (441 aa).

Belongs to the outer membrane factor (OMF) (TC 1.B.17) family.

This is an uncharacterized protein from Haemophilus influenzae (strain ATCC 51907 / DSM 11121 / KW20 / Rd).